The sequence spans 369 residues: Anhydro-N-acetylmuramic acid kinase (369 aa).

ATP is bound at residue 11 to 18 (GTSMDAVD).

This sequence belongs to the anhydro-N-acetylmuramic acid kinase family.

The enzyme catalyses 1,6-anhydro-N-acetyl-beta-muramate + ATP + H2O = N-acetyl-D-muramate 6-phosphate + ADP + H(+). It participates in amino-sugar metabolism; 1,6-anhydro-N-acetylmuramate degradation. Its pathway is cell wall biogenesis; peptidoglycan recycling. Its function is as follows. Catalyzes the specific phosphorylation of 1,6-anhydro-N-acetylmuramic acid (anhMurNAc) with the simultaneous cleavage of the 1,6-anhydro ring, generating MurNAc-6-P. Is required for the utilization of anhMurNAc either imported from the medium or derived from its own cell wall murein, and thus plays a role in cell wall recycling. This is Anhydro-N-acetylmuramic acid kinase from Idiomarina loihiensis (strain ATCC BAA-735 / DSM 15497 / L2-TR).